Reading from the N-terminus, the 116-residue chain is uncharacterized protein (116 aa).

The disordered stretch occupies residues 76–116; sequence VPPPRYSYIRSESSRNNLRNSARNQPQNLVSEQDSDSNREN. Over residues 85–99 the composition is skewed to low complexity; it reads RSESSRNNLRNSARN.

This is an uncharacterized protein from Glycine max (Soybean).